A 157-amino-acid chain; its full sequence is Crossover junction endodeoxyribonuclease RuvC (157 aa).

Catalysis depends on residues D7, E67, and D139. Residues D7, E67, and D139 each contribute to the Mg(2+) site.

It belongs to the RuvC family. As to quaternary structure, homodimer which binds Holliday junction (HJ) DNA. The HJ becomes 2-fold symmetrical on binding to RuvC with unstacked arms; it has a different conformation from HJ DNA in complex with RuvA. In the full resolvosome a probable DNA-RuvA(4)-RuvB(12)-RuvC(2) complex forms which resolves the HJ. Mg(2+) serves as cofactor.

It is found in the cytoplasm. It catalyses the reaction Endonucleolytic cleavage at a junction such as a reciprocal single-stranded crossover between two homologous DNA duplexes (Holliday junction).. In terms of biological role, the RuvA-RuvB-RuvC complex processes Holliday junction (HJ) DNA during genetic recombination and DNA repair. Endonuclease that resolves HJ intermediates. Cleaves cruciform DNA by making single-stranded nicks across the HJ at symmetrical positions within the homologous arms, yielding a 5'-phosphate and a 3'-hydroxyl group; requires a central core of homology in the junction. The consensus cleavage sequence is 5'-(A/T)TT(C/G)-3'. Cleavage occurs on the 3'-side of the TT dinucleotide at the point of strand exchange. HJ branch migration catalyzed by RuvA-RuvB allows RuvC to scan DNA until it finds its consensus sequence, where it cleaves and resolves the cruciform DNA. This chain is Crossover junction endodeoxyribonuclease RuvC, found in Prochlorococcus marinus (strain MIT 9312).